Here is a 150-residue protein sequence, read N- to C-terminus: MVLCFPLLLLLLVLWGPVCLLHAWPKHLTRAHWFEIQHIQPSPLQCNRAMSGINNYTQHCKHQNTFLHDSFQNVAAVCDLLSIICKNRQHNCHQSSKPVNMTDCRLTSGKYPQCRYSAAGLYKFFIVACDPPQKSDPPYKLVPVHLDSIL.

Positions 1–23 (MVLCFPLLLLLLVLWGPVCLLHA) are cleaved as a signal peptide. Residue His38 is the Proton acceptor of the active site. 4 disulfide bridges follow: Cys46–Cys104, Cys60–Cys114, Cys78–Cys129, and Cys85–Cys92. Residue Asn55 is glycosylated (N-linked (GlcNAc...) asparagine). Residues 61–65 (KHQNT) and Lys86 each bind substrate. The N-linked (GlcNAc...) asparagine glycan is linked to Asn100. Arg105 contributes to the substrate binding site. His145 functions as the Proton donor in the catalytic mechanism.

This sequence belongs to the pancreatic ribonuclease family. In terms of assembly, interacts (via N-terminus) with bacterial lipopolysaccharide (LPS).

The protein resides in the secreted. Its subcellular location is the lysosome. It is found in the cytoplasmic granule. Its function is as follows. Ribonuclease which shows a preference for the pyrimidines uridine and cytosine. Has potent antibacterial activity against a range of Gram-positive and Gram-negative bacteria, including P.aeruginosa, A.baumanii, M.luteus, S.aureus, E.faecalis, E.faecium, S.saprophyticus and E.coli. Causes loss of bacterial membrane integrity, and also promotes agglutination of Gram-negative bacteria. Probably contributes to urinary tract sterility. Bactericidal activity is independent of RNase activity. The sequence is that of Ribonuclease K6 (RNASE6) from Chlorocebus aethiops (Green monkey).